The following is a 213-amino-acid chain: N-(5'-phosphoribosyl)anthranilate isomerase (213 aa).

This sequence belongs to the TrpF family.

It catalyses the reaction N-(5-phospho-beta-D-ribosyl)anthranilate = 1-(2-carboxyphenylamino)-1-deoxy-D-ribulose 5-phosphate. Its pathway is amino-acid biosynthesis; L-tryptophan biosynthesis; L-tryptophan from chorismate: step 3/5. This is N-(5'-phosphoribosyl)anthranilate isomerase from Leptospira interrogans serogroup Icterohaemorrhagiae serovar copenhageni (strain Fiocruz L1-130).